Here is a 224-residue protein sequence, read N- to C-terminus: Beta-casein (224 aa).

A signal peptide spans 1–15; that stretch reads MKVLILACLVALALA. Phosphoserine occurs at positions 30, 32, 33, and 34.

It belongs to the beta-casein family. Mammary gland specific. Secreted in milk.

It is found in the secreted. Functionally, important role in determination of the surface properties of the casein micelles. This is Beta-casein (CSN2) from Bubalus bubalis (Domestic water buffalo).